We begin with the raw amino-acid sequence, 135 residues long: ATP synthase epsilon chain (135 aa).

The interval 101–122 is disordered; the sequence is TAVTKLEGQPSTPEKVKAQQLF.

Belongs to the ATPase epsilon chain family. As to quaternary structure, F-type ATPases have 2 components, CF(1) - the catalytic core - and CF(0) - the membrane proton channel. CF(1) has five subunits: alpha(3), beta(3), gamma(1), delta(1), epsilon(1). CF(0) has three main subunits: a, b and c.

It localises to the cellular thylakoid membrane. Produces ATP from ADP in the presence of a proton gradient across the membrane. The chain is ATP synthase epsilon chain from Synechococcus sp. (strain CC9311).